A 398-amino-acid chain; its full sequence is Succinate--CoA ligase [ADP-forming] subunit beta (398 aa).

The region spanning 9–254 (KALLKSFGAP…KTEEDAKEIE (246 aa)) is the ATP-grasp domain. ATP-binding positions include K46, 53 to 55 (GRG), E109, A112, and E117. Mg(2+) contacts are provided by N209 and D223. Residues N274 and 331–333 (GIM) each bind substrate.

This sequence belongs to the succinate/malate CoA ligase beta subunit family. As to quaternary structure, heterotetramer of two alpha and two beta subunits. The cofactor is Mg(2+).

The catalysed reaction is succinate + ATP + CoA = succinyl-CoA + ADP + phosphate. It catalyses the reaction GTP + succinate + CoA = succinyl-CoA + GDP + phosphate. It participates in carbohydrate metabolism; tricarboxylic acid cycle; succinate from succinyl-CoA (ligase route): step 1/1. Its function is as follows. Succinyl-CoA synthetase functions in the citric acid cycle (TCA), coupling the hydrolysis of succinyl-CoA to the synthesis of either ATP or GTP and thus represents the only step of substrate-level phosphorylation in the TCA. The beta subunit provides nucleotide specificity of the enzyme and binds the substrate succinate, while the binding sites for coenzyme A and phosphate are found in the alpha subunit. The polypeptide is Succinate--CoA ligase [ADP-forming] subunit beta (Allorhizobium ampelinum (strain ATCC BAA-846 / DSM 112012 / S4) (Agrobacterium vitis (strain S4))).